The sequence spans 356 residues: 3,4-dihydroxy-2-butanone 4-phosphate synthase (356 aa).

The segment at methionine 1 to methionine 211 is DHBP synthase. D-ribulose 5-phosphate contacts are provided by residues arginine 38–glutamate 39, aspartate 43, arginine 150–threonine 154, and glutamate 174. Glutamate 39 is a Mg(2+) binding site. Position 153 (histidine 153) interacts with Mg(2+). The tract at residues asparagine 212–alanine 356 is GTP cyclohydrolase II-like.

In the N-terminal section; belongs to the DHBP synthase family. It in the C-terminal section; belongs to the GTP cyclohydrolase II family. The cofactor is Mg(2+). Mn(2+) serves as cofactor.

The enzyme catalyses D-ribulose 5-phosphate = (2S)-2-hydroxy-3-oxobutyl phosphate + formate + H(+). It functions in the pathway cofactor biosynthesis; riboflavin biosynthesis; 2-hydroxy-3-oxobutyl phosphate from D-ribulose 5-phosphate: step 1/1. Functionally, catalyzes the conversion of D-ribulose 5-phosphate to formate and 3,4-dihydroxy-2-butanone 4-phosphate. The sequence is that of 3,4-dihydroxy-2-butanone 4-phosphate synthase (ribB) from Sulfurospirillum multivorans (Dehalospirillum multivorans).